The sequence spans 465 residues: Coumaroyl-CoA:anthocyanidin 3-O-glucoside-6''-O-coumaroyltransferase 2 (465 aa).

Met-1 is modified (N-acetylmethionine). Catalysis depends on proton acceptor residues His-173 and Asp-406.

It belongs to the plant acyltransferase family. Highly expressed in flowers, and leaves. Lower levels of expression in stems, roots and siliques.

Involved in the acylation of the 6'' position of the 3-O-glucose residue of anthocyanin. Also able to use flavonol 3-glucosides as the acyl acceptor. This is Coumaroyl-CoA:anthocyanidin 3-O-glucoside-6''-O-coumaroyltransferase 2 (3AT2) from Arabidopsis thaliana (Mouse-ear cress).